A 192-amino-acid chain; its full sequence is Akirin-1 (192 aa).

Residues 17–71 (LLSPGSPKRRRCAPLPGPTPGLRPPDAEPPPPFQTQTPPQSLQQPAPPGSERRLP) form a disordered region. A Phosphoserine modification is found at serine 22. The Nuclear localization signal motif lies at 23-28 (PKRRRC). Residues 31-49 (LPGPTPGLRPPDAEPPPPF) are compositionally biased toward pro residues. Low complexity predominate over residues 50–60 (QTQTPPQSLQQ). At threonine 72 the chain carries Phosphothreonine. Positions 104-122 (ASESQPHSSALTAPSSPGS) are enriched in polar residues. A disordered region spans residues 104–127 (ASESQPHSSALTAPSSPGSSWMKK). Residues 189 to 192 (SYVS) carry the SYVS motif motif.

The protein belongs to the akirin family. In terms of tissue distribution, widely expressed with the highest expression in heart, liver, placenta and peripheral blood leukocytes.

It is found in the nucleus. In terms of biological role, molecular adapter that acts as a bridge between proteins, and which is involved skeletal muscle development. Functions as a signal transducer for MSTN during skeletal muscle regeneration and myogenesis. May regulate chemotaxis of both macrophages and myoblasts by reorganising actin cytoskeleton, leading to more efficient lamellipodia formation via a PI3 kinase dependent pathway. In contrast to AKIRIN2, not involved in nuclear import of proteasomes. The sequence is that of Akirin-1 from Homo sapiens (Human).